The following is a 262-amino-acid chain: Ornithine carbamoyltransferase (262 aa).

Carbamoyl phosphate contacts are provided by residues 3 to 7 (STRTR), glutamine 30, arginine 54, and 81 to 84 (HPTQ). L-ornithine is bound by residues asparagine 114, aspartate 178, and 182-183 (SM). Carbamoyl phosphate-binding positions include 219-222 (HCLP) and threonine 247.

This sequence belongs to the aspartate/ornithine carbamoyltransferase superfamily. OTCase family.

It is found in the cytoplasm. The catalysed reaction is carbamoyl phosphate + L-ornithine = L-citrulline + phosphate + H(+). It functions in the pathway amino-acid biosynthesis; L-arginine biosynthesis; L-arginine from L-ornithine and carbamoyl phosphate: step 1/3. It participates in amino-acid degradation; L-arginine degradation via ADI pathway; carbamoyl phosphate from L-arginine: step 2/2. Functionally, reversibly catalyzes the transfer of the carbamoyl group from carbamoyl phosphate (CP) to the N(epsilon) atom of ornithine (ORN) to produce L-citrulline. This chain is Ornithine carbamoyltransferase (argF), found in Neisseria meningitidis.